Reading from the N-terminus, the 351-residue chain is MTNSIRIGTRKSPLALIHTNLVIQQIKQFFPDINCEIVPIITSGDLIQNKPLYDIGGKALFLKEIEQALLDKKIDLAVHSLKDVPGRMPEPLVIAAVLEREDPRDVFVCLKYKSIEELPQNAVIGSSAVRRKAFIQKIRPDLKVTVFRGNVDSRIKKLMTGEVDATILAYTGLKRLEVFNPEYCHLIEYSQMLPCIGQGVIAVEIRKDDNAMLEICNQINHLPTFELIKPERAFLEYLDANCRTPIAAYSQYLDANPRHLSKLAYREVLEGNTEALATAAYKSNRTDASTGLTYKLPLEVEFGKVSNIQTNFMLGNLDGSKITFHTETTNIKTSTEAGIKAAKMMLEAICK.

Position 242 is an S-(dipyrrolylmethanemethyl)cysteine (Cys242). The region spanning Pro257–Ser306 is the RPE1 insert domain.

It belongs to the HMBS family. In terms of assembly, monomer. Dipyrromethane is required as a cofactor.

The catalysed reaction is 4 porphobilinogen + H2O = hydroxymethylbilane + 4 NH4(+). Its pathway is porphyrin-containing compound metabolism; protoporphyrin-IX biosynthesis; coproporphyrinogen-III from 5-aminolevulinate: step 2/4. Its function is as follows. Tetrapolymerization of the monopyrrole PBG into the hydroxymethylbilane pre-uroporphyrinogen in several discrete steps. The polypeptide is Porphobilinogen deaminase (Rickettsia conorii (strain ATCC VR-613 / Malish 7)).